The following is an 864-amino-acid chain: Xylosyltransferase 2 (864 aa).

At 1 to 15 (MVASARVQKLVRRYK) the chain is on the cytoplasmic side. Residues 16–36 (LAIATALAILLLQGLVVWSFS) traverse the membrane as a helical; Signal-anchor for type II membrane protein segment. At 37 to 864 (GLEEDEPGEK…GPVKADGRLR (828 aa)) the chain is on the lumenal side. Disordered stretches follow at residues 39–123 (EEDE…RQNL) and 136–158 (AGFPQHGDTGSVEGAPQPTDNSF). Over residues 53–65 (RPLDPGEGSKDTD) the composition is skewed to basic and acidic residues. A compositionally biased stretch (basic residues) spans 73–82 (SAGRRHGRWR). N-linked (GlcNAc...) asparagine glycosylation is present at Asn122. 4 disulfides stabilise this stretch: Cys162–Cys190, Cys206–Cys448, Cys467–Cys480, and Cys469–Cys478. UDP-alpha-D-xylose contacts are provided by residues Val239, Asp267, and 296 to 298 (TIW). The N-linked (GlcNAc...) asparagine glycan is linked to Asn327. Residue 400 to 401 (DW) participates in UDP-alpha-D-xylose binding. Residues Ser481 and 504–505 (RK) contribute to the UDP-alpha-D-xylose site. 2 cysteine pairs are disulfide-bonded: Cys580-Cys832 and Cys825-Cys838. Residue Asn682 is glycosylated (N-linked (GlcNAc...) asparagine).

It belongs to the glycosyltransferase 14 family. XylT subfamily. In terms of assembly, monomer. The cofactor is Mg(2+). Mn(2+) is required as a cofactor. Post-translationally, contains disulfide bonds.

It localises to the golgi apparatus membrane. Its subcellular location is the secreted. It carries out the reaction UDP-alpha-D-xylose + L-seryl-[protein] = 3-O-(beta-D-xylosyl)-L-seryl-[protein] + UDP + H(+). The protein operates within glycan metabolism; chondroitin sulfate biosynthesis. It participates in glycan metabolism; heparan sulfate biosynthesis. Catalyzes the first step in the biosynthesis of chondroitin sulfate, heparan sulfate and dermatan sulfate proteoglycans, such as DCN. Transfers D-xylose from UDP-D-xylose to specific serine residues of the core protein. This Rattus norvegicus (Rat) protein is Xylosyltransferase 2 (Xylt2).